A 160-amino-acid polypeptide reads, in one-letter code: Probable chemoreceptor glutamine deamidase CheD (160 aa).

Belongs to the CheD family.

It carries out the reaction L-glutaminyl-[protein] + H2O = L-glutamyl-[protein] + NH4(+). In terms of biological role, probably deamidates glutamine residues to glutamate on methyl-accepting chemotaxis receptors (MCPs), playing an important role in chemotaxis. This is Probable chemoreceptor glutamine deamidase CheD from Desulfitobacterium hafniense (strain DSM 10664 / DCB-2).